We begin with the raw amino-acid sequence, 228 residues long: Ribonuclease 3 (228 aa).

An RNase III domain is found at 5–128 (LNRLMARLGY…IIGAMLLDGG (124 aa)). Residue glutamate 41 participates in Mg(2+) binding. Aspartate 45 is a catalytic residue. 2 residues coordinate Mg(2+): aspartate 114 and glutamate 117. Glutamate 117 is a catalytic residue. The DRBM domain maps to 155–225 (DAKTRLQEWL…ASLALEWLEQ (71 aa)).

The protein belongs to the ribonuclease III family. In terms of assembly, homodimer. It depends on Mg(2+) as a cofactor.

The protein localises to the cytoplasm. The enzyme catalyses Endonucleolytic cleavage to 5'-phosphomonoester.. Digests double-stranded RNA. Involved in the processing of primary rRNA transcript to yield the immediate precursors to the large and small rRNAs (23S and 16S). Processes some mRNAs, and tRNAs when they are encoded in the rRNA operon. Processes pre-crRNA and tracrRNA of type II CRISPR loci if present in the organism. The sequence is that of Ribonuclease 3 from Alcanivorax borkumensis (strain ATCC 700651 / DSM 11573 / NCIMB 13689 / SK2).